Here is a 372-residue protein sequence, read N- to C-terminus: Putative aminopeptidase SgcX (372 aa).

A divalent metal cation-binding residues include histidine 67 and aspartate 180. Glutamate 212 functions as the Proton acceptor in the catalytic mechanism. A divalent metal cation is bound by residues glutamate 213, aspartate 235, and histidine 329.

It belongs to the peptidase M42 family. Requires a divalent metal cation as cofactor.

The sequence is that of Putative aminopeptidase SgcX (sgcX) from Salmonella typhimurium (strain LT2 / SGSC1412 / ATCC 700720).